The following is a 584-amino-acid chain: Levansucrase (584 aa).

The signal sequence occupies residues 1–30 (MAHVRRKVATLNMALAGSLLMVLGAQSALA). The residue at position 31 (Gln31) is a Pyrrolidone carboxylic acid. Sucrose-binding residues include Trp134, Asp135, Ser225, Arg308, and Asp309. The active-site Nucleophile is the Asp135. A disulfide bridge connects residues Cys339 and Cys395. Glu401 acts as the Proton donor/acceptor in catalysis.

The protein belongs to the glycosyl hydrolase 68 family. In terms of assembly, monomer. Post-translationally, the N-terminus is blocked. The N-terminal Gln is cyclized to a pyroglutamic acid.

It is found in the secreted. The catalysed reaction is [6)-beta-D-fructofuranosyl-(2-&gt;](n) alpha-D-glucopyranoside + sucrose = [6)-beta-D-fructofuranosyl-(2-&gt;](n+1) alpha-D-glucopyranoside + D-glucose. Its activity is regulated as follows. Strongly inhibited by Hg(2+) and slightly activated by Co(2+). Not inhibited by the metal ion chelator EDTA, suggesting that this enzyme does not need a metal cofactor. Its function is as follows. Catalyzes the synthesis of levan, a fructose polymer, by transferring the fructosyl moiety from sucrose to a growing acceptor molecule. Also displays sucrose hydrolase activity. In vitro, catalyzes transfructosylation from sucrose to a variety of acceptors including water (sucrose hydrolysis), glucose (exchange reaction), fructan (polymerase reaction) and sucrose (oligofructoside synthesis). Levansucrase of G.diazotrophicus SRT4, unlike the enzyme of B.subtilis, causes accumulation of large quantities of tri- and tetrasaccharides but small quantities of high-molecular-mass levan. It may act more as a sucrose hydrolase than as a fructan polymerase, and may be the key enzyme in the sucrose metabolism of G.diazotrophicus SRT4. The chain is Levansucrase from Gluconacetobacter diazotrophicus (Acetobacter diazotrophicus).